The following is a 116-amino-acid chain: uncharacterized protein (116 aa).

A signal peptide spans 1–19; sequence MRWDVIILYAISRPYATRR. Positions 18 to 50 are disordered; sequence RRTGSHTHPRDSRYIAANQRRPPSACRVGPSPA.

This is an uncharacterized protein from Saccharomyces cerevisiae (strain ATCC 204508 / S288c) (Baker's yeast).